Here is a 160-residue protein sequence, read N- to C-terminus: Cytochrome b6-f complex subunit 4 (160 aa).

Helical transmembrane passes span 36–56, 95–115, and 131–151; these read LLYIFPVVILGTIACIVGLAV, LLGIALQTLVPLGLMLVPFIE, and TVFLFGTVTTIYLGIGAALPI.

Belongs to the cytochrome b family. PetD subfamily. As to quaternary structure, the 4 large subunits of the cytochrome b6-f complex are cytochrome b6, subunit IV (17 kDa polypeptide, PetD), cytochrome f and the Rieske protein, while the 4 small subunits are PetG, PetL, PetM and PetN. The complex functions as a dimer.

It localises to the cellular thylakoid membrane. Its function is as follows. Component of the cytochrome b6-f complex, which mediates electron transfer between photosystem II (PSII) and photosystem I (PSI), cyclic electron flow around PSI, and state transitions. The sequence is that of Cytochrome b6-f complex subunit 4 from Parasynechococcus marenigrum (strain WH8102).